The chain runs to 386 residues: Galactokinase (386 aa).

35 to 38 (EHTD) contacts substrate. ATP-binding positions include Ser69 and 125–131 (GAGLSSS). Residues Ser131 and Glu163 each coordinate Mg(2+). The Proton acceptor role is filled by Asp175. Tyr224 contacts substrate.

This sequence belongs to the GHMP kinase family. GalK subfamily.

It is found in the cytoplasm. The enzyme catalyses alpha-D-galactose + ATP = alpha-D-galactose 1-phosphate + ADP + H(+). Its pathway is carbohydrate metabolism; galactose metabolism. In terms of biological role, catalyzes the transfer of the gamma-phosphate of ATP to D-galactose to form alpha-D-galactose-1-phosphate (Gal-1-P). The protein is Galactokinase of Vibrio vulnificus (strain YJ016).